The sequence spans 20 residues: Fibrinogen beta chain (20 aa).

Residues 1 to 20 are disordered; that stretch reads ATDYEDEEFPGAVPPSVGAR. Residue T2 is glycosylated (O-linked (GalNAc...) threonine). Sulfotyrosine is present on Y4.

In terms of assembly, heterohexamer; disulfide linked. Contains 2 sets of 3 non-identical chains (alpha, beta and gamma). The 2 heterotrimers are in head to head conformation with the N-termini in a small central domain. In terms of processing, conversion of fibrinogen to fibrin is triggered by thrombin, which cleaves fibrinopeptides A and B from alpha and beta chains, and thus exposes the N-terminal polymerization sites responsible for the formation of the soft clot.

It is found in the secreted. Functionally, cleaved by the protease thrombin to yield monomers which, together with fibrinogen alpha (FGA) and fibrinogen gamma (FGG), polymerize to form an insoluble fibrin matrix. Fibrin has a major function in hemostasis as one of the primary components of blood clots. In addition, functions during the early stages of wound repair to stabilize the lesion and guide cell migration during re-epithelialization. Was originally thought to be essential for platelet aggregation, based on in vitro studies using anticoagulated blood. However subsequent studies have shown that it is not absolutely required for thrombus formation in vivo. Enhances expression of SELP in activated platelets. Maternal fibrinogen is essential for successful pregnancy. Fibrin deposition is also associated with infection, where it protects against IFNG-mediated hemorrhage. May also facilitate the antibacterial immune response via both innate and T-cell mediated pathways. The polypeptide is Fibrinogen beta chain (FGB) (Elephas maximus (Indian elephant)).